The chain runs to 254 residues: Pyridoxine 5'-phosphate synthase (254 aa).

Asn-12 serves as a coordination point for 3-amino-2-oxopropyl phosphate. A 1-deoxy-D-xylulose 5-phosphate-binding site is contributed by 14-15 (DH). Residue Arg-23 coordinates 3-amino-2-oxopropyl phosphate. Residue His-48 is the Proton acceptor of the active site. 1-deoxy-D-xylulose 5-phosphate contacts are provided by Arg-50 and His-55. Residue Glu-75 is the Proton acceptor of the active site. A 1-deoxy-D-xylulose 5-phosphate-binding site is contributed by Thr-105. Residue His-199 is the Proton donor of the active site. 3-amino-2-oxopropyl phosphate is bound by residues Gly-200 and 221–222 (GF).

Belongs to the PNP synthase family. In terms of assembly, homooctamer; tetramer of dimers.

Its subcellular location is the cytoplasm. It carries out the reaction 3-amino-2-oxopropyl phosphate + 1-deoxy-D-xylulose 5-phosphate = pyridoxine 5'-phosphate + phosphate + 2 H2O + H(+). It functions in the pathway cofactor biosynthesis; pyridoxine 5'-phosphate biosynthesis; pyridoxine 5'-phosphate from D-erythrose 4-phosphate: step 5/5. Functionally, catalyzes the complicated ring closure reaction between the two acyclic compounds 1-deoxy-D-xylulose-5-phosphate (DXP) and 3-amino-2-oxopropyl phosphate (1-amino-acetone-3-phosphate or AAP) to form pyridoxine 5'-phosphate (PNP) and inorganic phosphate. The polypeptide is Pyridoxine 5'-phosphate synthase (Rhodopseudomonas palustris (strain HaA2)).